Consider the following 224-residue polypeptide: Putative endoglucanase X (224 aa).

Residues 147 to 168 (QTQPTPSPSPTPTDSPLVKKGD) form a disordered region. The Dockerin domain occupies 162 to 224 (PLVKKGDVNL…SILKRILLRN (63 aa)).

The enzyme catalyses Endohydrolysis of (1-&gt;4)-beta-D-glucosidic linkages in cellulose, lichenin and cereal beta-D-glucans.. Functionally, this enzyme catalyzes the endohydrolysis of 1,4-beta-glucosidic linkages in cellulose, lichenin and cereal beta-D-glucans. The protein is Putative endoglucanase X (celX) of Acetivibrio thermocellus (Hungateiclostridium thermocellum).